Here is a 595-residue protein sequence, read N- to C-terminus: UvrABC system protein C (595 aa).

The region spanning 17-94 is the GIY-YIG domain; sequence FEPGCYLMKD…IKQYQPRYNI (78 aa). Residues 199 to 234 form the UVR domain; the sequence is KTIIKNLESRMQAASENLEFEQAKEYRDLIQNIHNL.

Belongs to the UvrC family. As to quaternary structure, interacts with UvrB in an incision complex.

It localises to the cytoplasm. Its function is as follows. The UvrABC repair system catalyzes the recognition and processing of DNA lesions. UvrC both incises the 5' and 3' sides of the lesion. The N-terminal half is responsible for the 3' incision and the C-terminal half is responsible for the 5' incision. The polypeptide is UvrABC system protein C (Staphylococcus carnosus (strain TM300)).